The primary structure comprises 411 residues: LL-diaminopimelate aminotransferase (411 aa).

2 residues coordinate substrate: Tyr-15 and Gly-42. Pyridoxal 5'-phosphate-binding positions include Tyr-72, 108–109 (SK), Tyr-132, Asn-187, Tyr-218, and 246–248 (SFS). Residues Lys-109, Tyr-132, and Asn-187 each coordinate substrate. Residue Lys-249 is modified to N6-(pyridoxal phosphate)lysine. Pyridoxal 5'-phosphate is bound by residues Arg-257 and Asn-292. Residues Asn-292 and Arg-388 each coordinate substrate.

Belongs to the class-I pyridoxal-phosphate-dependent aminotransferase family. LL-diaminopimelate aminotransferase subfamily. In terms of assembly, homodimer. It depends on pyridoxal 5'-phosphate as a cofactor.

The catalysed reaction is (2S,6S)-2,6-diaminopimelate + 2-oxoglutarate = (S)-2,3,4,5-tetrahydrodipicolinate + L-glutamate + H2O + H(+). Its pathway is amino-acid biosynthesis; L-lysine biosynthesis via DAP pathway; LL-2,6-diaminopimelate from (S)-tetrahydrodipicolinate (aminotransferase route): step 1/1. Involved in the synthesis of meso-diaminopimelate (m-DAP or DL-DAP), required for both lysine and peptidoglycan biosynthesis. Catalyzes the direct conversion of tetrahydrodipicolinate to LL-diaminopimelate. This chain is LL-diaminopimelate aminotransferase, found in Synechococcus sp. (strain JA-3-3Ab) (Cyanobacteria bacterium Yellowstone A-Prime).